Consider the following 200-residue polypeptide: Recombination protein RecR (200 aa).

A C4-type zinc finger spans residues 58-73 (CQVCGNMDTENICGIC). One can recognise a Toprim domain in the interval 81–176 (SVIAIVETVA…KISRLASGIP (96 aa)).

The protein belongs to the RecR family.

Its function is as follows. May play a role in DNA repair. It seems to be involved in an RecBC-independent recombinational process of DNA repair. It may act with RecF and RecO. The protein is Recombination protein RecR of Rickettsia bellii (strain OSU 85-389).